The following is a 310-amino-acid chain: Protein N-terminal asparagine amidohydrolase (310 aa).

In terms of assembly, monomer.

It is found in the cytoplasm. It carries out the reaction N-terminal L-asparaginyl-[protein] + H2O + H(+) = N-terminal L-aspartyl-[protein] + NH4(+). With respect to regulation, inhibited by micromolar concentrations of copper and zinc ions. N-terminal asparagine deamidase that mediates deamidation of N-terminal asparagine residues to aspartate. Required for the ubiquitin-dependent turnover of intracellular proteins that initiate with Met-Asn. These proteins are acetylated on the retained initiator methionine and can subsequently be modified by the removal of N-acetyl methionine by acylaminoacid hydrolase (AAH). Conversion of the resulting N-terminal asparagine to aspartate by NTAN1/PNAD renders the protein susceptible to arginylation, polyubiquitination and degradation as specified by the N-end rule. This enzyme does not act on substrates with internal or C-terminal asparagines and does not act on glutamine residues in any position, nor on acetylated N-terminal peptidyl Asn. In Homo sapiens (Human), this protein is Protein N-terminal asparagine amidohydrolase (NTAN1).